A 1279-amino-acid chain; its full sequence is Amylopullulanase (1279 aa).

The signal sequence occupies residues 1 to 35 (MYKKLFTKKFISFVMSLLLVLTAAFSSMPFHNVYA). Ca(2+) is bound by residues D248, N250, D288, D343, N401, D403, N406, D407, G452, and D454. Substrate is bound by residues H527 and R627. Catalysis depends on D629, which acts as the Nucleophile. The active-site Proton donor is the E658. Substrate-binding positions include 734-735 (HD), D794, and R798. 2 consecutive Fibronectin type-III domains span residues 930–1022 (APQV…AYPI) and 1158–1252 (KPTA…VVPI).

This sequence belongs to the glycosyl hydrolase 13 family. Ca(2+) is required as a cofactor.

The enzyme catalyses Endohydrolysis of (1-&gt;4)-alpha-D-glucosidic linkages in polysaccharides containing three or more (1-&gt;4)-alpha-linked D-glucose units.. It catalyses the reaction Hydrolysis of (1-&gt;6)-alpha-D-glucosidic linkages in pullulan, amylopectin and glycogen, and in the alpha- and beta-limit dextrins of amylopectin and glycogen.. The sequence is that of Amylopullulanase (apu) from Thermoanaerobacterium saccharolyticum.